The following is a 165-amino-acid chain: ATP synthase subunit b (165 aa).

A helical membrane pass occupies residues 5-27 (INSTTLGNIIITLGSVFLLYYLI).

The protein belongs to the ATPase B chain family. As to quaternary structure, F-type ATPases have 2 components, F(1) - the catalytic core - and F(0) - the membrane proton channel. F(1) has five subunits: alpha(3), beta(3), gamma(1), delta(1), epsilon(1). F(0) has three main subunits: a(1), b(2) and c(10-14). The alpha and beta chains form an alternating ring which encloses part of the gamma chain. F(1) is attached to F(0) by a central stalk formed by the gamma and epsilon chains, while a peripheral stalk is formed by the delta and b chains.

The protein resides in the cell membrane. Functionally, f(1)F(0) ATP synthase produces ATP from ADP in the presence of a proton or sodium gradient. F-type ATPases consist of two structural domains, F(1) containing the extramembraneous catalytic core and F(0) containing the membrane proton channel, linked together by a central stalk and a peripheral stalk. During catalysis, ATP synthesis in the catalytic domain of F(1) is coupled via a rotary mechanism of the central stalk subunits to proton translocation. Component of the F(0) channel, it forms part of the peripheral stalk, linking F(1) to F(0). The polypeptide is ATP synthase subunit b (Streptococcus thermophilus (strain CNRZ 1066)).